The sequence spans 167 residues: Elafin (167 aa).

Positions 1-21 (MRSRSFLVLVVVFLICGTLVA) are cleaved as a signal peptide. A propeptide spanning residues 22–70 (QAAGRIRRPKGKGTKKILALVKGQGPVRGKDQVKGQGPVKGQDLGKSQD) is cleaved from the precursor. Tandem repeats lie at residues 44 to 49 (GQGPVR), 50 to 55 (GKDQVK), 56 to 61 (GQGPVK), 62 to 67 (GQDLGK), 68 to 73 (SQDPVK), 74 to 79 (AQLPDK), 80 to 85 (GQDLGK), 86 to 91 (GEDSVK), 92 to 97 (GQDPFK), 98 to 103 (AQLPDK), 104 to 109 (LQDPVK), and 110 to 115 (AQPAIK). The tract at residues 44–115 (GQGPVRGKDQ…DPVKAQPAIK (72 aa)) is 12 X 6 AA tandem repeats of [GSAL]-[QEK]-[DGLP]-[APSLQ]-[VGDFI]-[KR]. A disordered region spans residues 46-104 (GPVRGKDQVKGQGPVKGQDLGKSQDPVKAQLPDKGQDLGKGEDSVKGQDPFKAQLPDKL). The tract at residues 78–126 (DKGQDLGKGEDSVKGQDPFKAQLPDKLQDPVKAQPAIKRLILLTKPGSC) is 2 X tandem repeats of SVP-1 like motif. Over residues 79-91 (KGQDLGKGEDSVK) the composition is skewed to basic and acidic residues. 2 SVP-1 clotting repeats span residues 80-101 (GQDLGKGEDSVKGQDPFKAQLP) and 104-126 (LQDPVKAQPAIKRLILLTKPGSC). In terms of domain architecture, WAP spans 119-167 (LLTKPGSCPRILIRCLMVNPPNRCLSDAQCPGLKKCCEGFCGKACMDPK). 4 disulfides stabilise this stretch: Cys-126-Cys-155, Cys-133-Cys-159, Cys-142-Cys-154, and Cys-148-Cys-163.

Trachea and large intestine.

In terms of biological role, neutrophil and pancreatic elastase-specific inhibitor of skin. It may prevent elastase-mediated tissue proteolysis. In Sus scrofa (Pig), this protein is Elafin.